A 302-amino-acid chain; its full sequence is GLABROUS1 enhancer-binding protein (302 aa).

Disordered regions lie at residues 1 to 55 (MVTP…MKKK) and 158 to 229 (GQGD…NDDD). Serine 27 is subject to Phosphoserine. The segment covering 180-195 (RTNESGEEMLKEHEEE) has biased composition (basic and acidic residues). Residues 208–217 (AKTTENGTSS) are compositionally biased toward polar residues. The segment at 270–291 (LSDEWKALCVEETRFNIKKLRF) is non-canonical leucine-zipper.

It belongs to the GeBP family. As to quaternary structure, homo- and heterodimers. Interacts with GPL1, GPL2 and GPL3. Interacts with KIN10, KIN11 and FLZ4. Interacts with KIN10 and KIN11 via its N-terminal part. Interacts with GPL1 and GPL3 via its C-terminal part. As to expression, expressed in the apical meristem and young leaf primordia. Not detected in emerging or mature leaves. Detected in the vascular tissues of cotyledons and leaves, in hydathodes and at the base of flowers and siliques, but not in roots.

The protein localises to the nucleus. The protein resides in the nucleolus. Its function is as follows. DNA-binding protein, which specifically recognizes the GL1 enhancer sequence. May be involved in leaf initiation. May play redundant roles with GPL1 and GPL2 in cytokinin responses by regulating the transcript levels of type-A ARR response genes. Involved in stress responses. Plays a repressive role in cell expansion by counteracting the positive role of CPR5 in this process, but does not regulate cell proliferation or endoreduplication. May play a role in plant defense. This Arabidopsis thaliana (Mouse-ear cress) protein is GLABROUS1 enhancer-binding protein.